We begin with the raw amino-acid sequence, 203 residues long: Large ribosomal subunit protein uL13 (203 aa).

At A2 the chain carries N-acetylalanine. The residue at position 59 (R59) is a Citrulline. Phosphoserine is present on S77. Position 140 is a citrulline (R140). K191 is subject to N6-acetyllysine.

Belongs to the universal ribosomal protein uL13 family. As to quaternary structure, component of the 60S ribosome. Component of the GAIT complex. Interacts with EIF4G1. Post-translationally, phosphorylation at Ser-77 upon interferon-gamma treatment in macrophages involves a DAPK1-DAPK3 kinase cascade and is causing release from the ribosome, association with the GAIT complex and subsequent involvement in transcript-selective translation inhibition. Citrullinated by PADI4.

The protein localises to the cytoplasm. Functionally, associated with ribosomes but is not required for canonical ribosome function and has extra-ribosomal functions. Component of the GAIT (gamma interferon-activated inhibitor of translation) complex which mediates interferon-gamma-induced transcript-selective translation inhibition in inflammation processes. Upon interferon-gamma activation and subsequent phosphorylation dissociates from the ribosome and assembles into the GAIT complex which binds to stem loop-containing GAIT elements in the 3'-UTR of diverse inflammatory mRNAs (such as ceruplasmin) and suppresses their translation. In the GAIT complex interacts with m7G cap-bound eIF4G at or near the eIF3-binding site and blocks the recruitment of the 43S ribosomal complex. Involved in methylation of rRNA. The protein is Large ribosomal subunit protein uL13 (RPL13A) of Bos taurus (Bovine).